A 309-amino-acid polypeptide reads, in one-letter code: Taste receptor type 2 member 66 (309 aa).

Position 1 (M1) is a topological domain, extracellular. Residues 2–22 form a helical membrane-spanning segment; that stretch reads ITFLPIIFSILIVVTFVIGNF. The Cytoplasmic segment spans residues 23 to 46; sequence ANGFIALANSIEWFKRQKISFADQ. Residues 47–67 form a helical membrane-spanning segment; the sequence is ILTALAVPRVGLLWVLLLNWY. The Extracellular portion of the chain corresponds to 68–86; it reads ATELNPAFYSIEVRITAYN. The chain crosses the membrane as a helical span at residues 87–107; sequence LWAVINHFSNWLATSLSIFYL. Residues 108-126 lie on the Cytoplasmic side of the membrane; that stretch reads LKIANFSNLIFLRLKRRVK. A helical membrane pass occupies residues 127–147; that stretch reads SVVLVILLGPLLFLVCHLFVI. Topologically, residues 148 to 178 are extracellular; it reads NMNQIIWTKEYEGNMTWKIKLRSAMYLSNTT. N-linked (GlcNAc...) asparagine glycans are attached at residues N161 and N176. Residues 179 to 199 form a helical membrane-spanning segment; that stretch reads VTILANLVPFTVTLISFLLLV. Topologically, residues 200–229 are cytoplasmic; sequence CSLCKHLKKMQLHGKGSQDPSTKVHIKALQ. Residues 230–250 form a helical membrane-spanning segment; it reads TVISFLLLCAIYFVSVIISVW. The Extracellular portion of the chain corresponds to 251–259; sequence SFKNLENKP. Residues 260 to 280 traverse the membrane as a helical segment; the sequence is VFMFCQAIGFSCSSAHPFILI. Topologically, residues 281 to 309 are cytoplasmic; the sequence is WGNKKLKQPFLSVLWQMRYWVKGEKPSSS.

This sequence belongs to the G-protein coupled receptor T2R family.

Its subcellular location is the membrane. In terms of biological role, receptor that may play a role in the perception of bitterness and is gustducin-linked. May play a role in sensing the chemical composition of the gastrointestinal content. The activity of this receptor may stimulate alpha gustducin, mediate PLC-beta-2 activation and lead to the gating of TRPM5. The sequence is that of Taste receptor type 2 member 66 (TAS2R66) from Pan paniscus (Pygmy chimpanzee).